The chain runs to 479 residues: MSGFRVLDLVKPFTPFMPEVIAPERKVAFQQRLMWTGVTLLIFLVMSEIPLYGIASSDGSDPLYWLRMMLASNRGTLMELGISPIVSAGMVFQLLQGTKLITVDMSNKNDRDQFQTAQKLFAILLAVGQATVYVLTGMYGPPSSLGTGVCLLLVLQLVFAGIVVILLDELLQKGYGLGSGISLFTATNVCEQVFWKAFAPTTSNIGKGTEFEGAVVALFHLLGSRKDKKRALLEAFYRSHLPNMFQLIATVFVFLLVVYLQGFRIELPIKSTRQRGPYGLYPIRLFYTSNIPIMLQSALSSNIFIISQMLFVRWPNNIFVKILGSWDTRQGAAQLYAVSGLAYYIQPPLSFTEALLDPIKTIIYIIFVLGSCAVFSTTWIEISGASPRDVAKQFKEQGLVIAGHRDTSAYRELKKIIPTAAAFGGATIGALSVFCDLMGTLGSGTSILLSVTTIYGYYELAMKEGGFGKSVVSSFSDGI.

Topologically, residues 1–33 (MSGFRVLDLVKPFTPFMPEVIAPERKVAFQQRL) are cytoplasmic. A helical transmembrane segment spans residues 34-54 (MWTGVTLLIFLVMSEIPLYGI). At 55–76 (ASSDGSDPLYWLRMMLASNRGT) the chain is on the lumenal side. Residues 77–97 (LMELGISPIVSAGMVFQLLQG) traverse the membrane as a helical segment. Topologically, residues 98–119 (TKLITVDMSNKNDRDQFQTAQK) are cytoplasmic. Residues 120-140 (LFAILLAVGQATVYVLTGMYG) form a helical membrane-spanning segment. Residues 141–146 (PPSSLG) are Lumenal-facing. Residues 147-167 (TGVCLLLVLQLVFAGIVVILL) form a helical membrane-spanning segment. At 168 to 246 (DELLQKGYGL…YRSHLPNMFQ (79 aa)) the chain is on the cytoplasmic side. A helical membrane pass occupies residues 247-267 (LIATVFVFLLVVYLQGFRIEL). Residues 268-361 (PIKSTRQRGP…TEALLDPIKT (94 aa)) are Lumenal-facing. The helical transmembrane segment at 362–382 (IIYIIFVLGSCAVFSTTWIEI) threads the bilayer. Residues 383-415 (SGASPRDVAKQFKEQGLVIAGHRDTSAYRELKK) lie on the Cytoplasmic side of the membrane. Residues 416-434 (IIPTAAAFGGATIGALSVF) traverse the membrane as a helical segment. At 435–440 (CDLMGT) the chain is on the lumenal side. The helical transmembrane segment at 441 to 458 (LGSGTSILLSVTTIYGYY) threads the bilayer. Over 459-479 (ELAMKEGGFGKSVVSSFSDGI) the chain is Cytoplasmic.

The protein belongs to the SecY/SEC61-alpha family. In terms of assembly, heterotrimeric complex composed of SEC61-alpha, SEC61-beta and SEC61-gamma.

It is found in the endoplasmic reticulum membrane. Its function is as follows. Appears to play a crucial role in the insertion of secretory and membrane polypeptides into the ER. It is required for assembly of membrane and secretory proteins and is essential for cell growth. It interacts with other membrane proteins required for protein translocation. Upon binding to SEC62/63 complex, secretory precursor polypeptides may engage SEC61 to begin membrane penetration event. A cycle of assembly and disassembly of SEC62/63 from SEC61 may govern the activity of the translocase. This chain is Protein transport protein SEC61 subunit alpha (SEC61), found in Debaryomyces hansenii (strain ATCC 36239 / CBS 767 / BCRC 21394 / JCM 1990 / NBRC 0083 / IGC 2968) (Yeast).